The following is a 664-amino-acid chain: Zinc finger protein 800 (664 aa).

The segment at 69–91 (FECKLCRSLFRGLPNLITHKKFY) adopts a C2H2-type 1; degenerate zinc-finger fold. A Glycyl lysine isopeptide (Lys-Gly) (interchain with G-Cter in SUMO2) cross-link involves residue lysine 132. 2 stretches are compositionally biased toward polar residues: residues 154–179 (IEVT…EQSK) and 207–224 (SDEQ…SDNS). The interval 154–224 (IEVTESSSTP…QADLETSDNS (71 aa)) is disordered. The segment at 230 to 253 (LICCLCRKEFNSRRGVRRHIRKVH) adopts a C2H2-type 2 zinc-finger fold. Lysine 279 participates in a covalent cross-link: Glycyl lysine isopeptide (Lys-Gly) (interchain with G-Cter in SUMO2). Residues 287–310 (RSCPVCCKSFATKANVRRHFDEVH) form a C2H2-type 3 zinc finger. Serine 317 carries the post-translational modification Phosphoserine. Threonine 319 is subject to Phosphothreonine. Positions 328–349 (QPLFLDSISPKKSFKTRKQKSS) are disordered. Serine 336 bears the Phosphoserine mark. Residues 339–348 (KSFKTRKQKS) are compositionally biased toward basic residues. A C2H2-type 4 zinc finger spans residues 357 to 382 (TACKCLLCKRKYSSQIMLKRHMQIVH). The tract at residues 388–476 (GTNSKREKGP…GGQQKTRKPK (89 aa)) is disordered. A Glycyl lysine isopeptide (Lys-Gly) (interchain with G-Cter in SUMO2) cross-link involves residue lysine 392. Lysine 409 participates in a covalent cross-link: Glycyl lysine isopeptide (Lys-Gly) (interchain with G-Cter in SUMO1); alternate. Residue lysine 409 forms a Glycyl lysine isopeptide (Lys-Gly) (interchain with G-Cter in SUMO2); alternate linkage. Polar residues predominate over residues 416-436 (VESSPPSITHSPQNELKGTNH). 6 positions are modified to phosphoserine: serine 422, serine 426, serine 455, serine 457, serine 460, and serine 462. The segment covering 458–470 (PKSTSPSAAGGQQ) has biased composition (polar residues). Lysine 476 participates in a covalent cross-link: Glycyl lysine isopeptide (Lys-Gly) (interchain with G-Cter in SUMO2). 2 C2H2-type zinc fingers span residues 486–508 (LYCK…IELH) and 519–542 (YKCP…TVVH). 2 disordered regions span residues 574 to 599 (KRGP…PSKK) and 635 to 664 (HHKK…KALV). Over residues 577–591 (PSRDEAKHSDSKHDG) the composition is skewed to basic and acidic residues. Lysine 599 participates in a covalent cross-link: Glycyl lysine isopeptide (Lys-Gly) (interchain with G-Cter in SUMO2). Residues 618-640 (HRCNKCGKAFAKKTYLEHHKKTH) form a C2H2-type 7 zinc finger. The segment covering 653-664 (TKGRSTRSKALV) has biased composition (basic residues).

Belongs to the krueppel C2H2-type zinc-finger protein family.

The protein localises to the nucleus. In terms of biological role, may be involved in transcriptional regulation. The sequence is that of Zinc finger protein 800 (ZNF800) from Homo sapiens (Human).